A 330-amino-acid polypeptide reads, in one-letter code: Aspartate--ammonia ligase (330 aa).

Belongs to the class-II aminoacyl-tRNA synthetase family. AsnA subfamily.

Its subcellular location is the cytoplasm. The enzyme catalyses L-aspartate + NH4(+) + ATP = L-asparagine + AMP + diphosphate + H(+). It functions in the pathway amino-acid biosynthesis; L-asparagine biosynthesis; L-asparagine from L-aspartate (ammonia route): step 1/1. This chain is Aspartate--ammonia ligase, found in Streptococcus pyogenes serotype M6 (strain ATCC BAA-946 / MGAS10394).